The following is a 340-amino-acid chain: Ketol-acid reductoisomerase (NADP(+)) (340 aa).

Positions 1-182 (MRVYYDRDCD…GGGRSGIIET (182 aa)) constitute a KARI N-terminal Rossmann domain. Residues 24 to 27 (YGSQ), R48, S51, S53, and 83 to 86 (DELQ) contribute to the NADP(+) site. H108 is a catalytic residue. NADP(+) is bound at residue G134. A KARI C-terminal knotted domain is found at 183-329 (NFRQECETDL…EKLRGMMPWI (147 aa)). Residues D191, E195, E227, and E231 each contribute to the Mg(2+) site. Substrate is bound at residue S252.

Belongs to the ketol-acid reductoisomerase family. Mg(2+) is required as a cofactor.

It carries out the reaction (2R)-2,3-dihydroxy-3-methylbutanoate + NADP(+) = (2S)-2-acetolactate + NADPH + H(+). The catalysed reaction is (2R,3R)-2,3-dihydroxy-3-methylpentanoate + NADP(+) = (S)-2-ethyl-2-hydroxy-3-oxobutanoate + NADPH + H(+). The protein operates within amino-acid biosynthesis; L-isoleucine biosynthesis; L-isoleucine from 2-oxobutanoate: step 2/4. Its pathway is amino-acid biosynthesis; L-valine biosynthesis; L-valine from pyruvate: step 2/4. In terms of biological role, involved in the biosynthesis of branched-chain amino acids (BCAA). Catalyzes an alkyl-migration followed by a ketol-acid reduction of (S)-2-acetolactate (S2AL) to yield (R)-2,3-dihydroxy-isovalerate. In the isomerase reaction, S2AL is rearranged via a Mg-dependent methyl migration to produce 3-hydroxy-3-methyl-2-ketobutyrate (HMKB). In the reductase reaction, this 2-ketoacid undergoes a metal-dependent reduction by NADPH to yield (R)-2,3-dihydroxy-isovalerate. The protein is Ketol-acid reductoisomerase (NADP(+)) of Cereibacter sphaeroides (strain ATCC 17023 / DSM 158 / JCM 6121 / CCUG 31486 / LMG 2827 / NBRC 12203 / NCIMB 8253 / ATH 2.4.1.) (Rhodobacter sphaeroides).